The chain runs to 166 residues: Peptide methionine sulfoxide reductase MsrA (166 aa).

C11 is a catalytic residue.

This sequence belongs to the MsrA Met sulfoxide reductase family.

The catalysed reaction is L-methionyl-[protein] + [thioredoxin]-disulfide + H2O = L-methionyl-(S)-S-oxide-[protein] + [thioredoxin]-dithiol. It carries out the reaction [thioredoxin]-disulfide + L-methionine + H2O = L-methionine (S)-S-oxide + [thioredoxin]-dithiol. Functionally, has an important function as a repair enzyme for proteins that have been inactivated by oxidation. Catalyzes the reversible oxidation-reduction of methionine sulfoxide in proteins to methionine. The sequence is that of Peptide methionine sulfoxide reductase MsrA from Lachnoclostridium phytofermentans (strain ATCC 700394 / DSM 18823 / ISDg) (Clostridium phytofermentans).